Here is a 92-residue protein sequence, read N- to C-terminus: Muscle LIM protein 1 (92 aa).

An LIM zinc-binding domain is found at 11–62 (CPACGKSVYAAEERVAGGYKFHKTCFKCSMCNKALDSTNCTEHEKELFCKNC). The short motif at 65-70 (RKYGPK) is the Nuclear localization signal element.

In terms of tissue distribution, in the embryo, expression is restricted to the somatic, visceral, and pharyngeal muscles. Within the somatic musculature, MLP60 is distributed throughout the muscle fibers. There is no expression in cardiac mesoderm or in fat body.

It localises to the cytoplasm. It is found in the nucleus. Functionally, positive regulator of myogenesis. In Drosophila melanogaster (Fruit fly), this protein is Muscle LIM protein 1 (Mlp60A).